Consider the following 792-residue polypeptide: Kinesin-associated protein 3 (792 aa).

Position 60 is a phosphoserine (S60). Positions 103–119 are enriched in basic and acidic residues; sequence LSGKEKKEKSSKPKDPP. The segment at 103–124 is disordered; the sequence is LSGKEKKEKSSKPKDPPPFEGM. ARM repeat units lie at residues 333 to 373, 374 to 412, 494 to 533, 578 to 620, and 621 to 662; these read FMEN…NLSF, DTGLRNKMVQVGLLPKLTALLGNDNYKQIAMCVLYHISM, DGPTKNLFIDYVGDLAAQISNDEEEEFVIECLGTLANLTI, DDSC…QMVF, and HQAT…IIAE.

As to quaternary structure, heterotrimer of KIFAP3, KIF3A and KIF3B. Interacts with RAP1GDS1/SMG GDS. Interacts with SMC3 subunit of the cohesin complex. Post-translationally, phosphorylated on tyrosine residues by SRC in vitro; this reduces the binding affinity of the protein for RAP1GDS1.

In terms of biological role, involved in tethering the chromosomes to the spindle pole and in chromosome movement. Binds to the tail domain of the KIF3A/KIF3B heterodimer to form a heterotrimeric KIF3 complex and may regulate the membrane binding of this complex. In Homo sapiens (Human), this protein is Kinesin-associated protein 3 (KIFAP3).